The sequence spans 77 residues: Putative membrane protein insertion efficiency factor (77 aa).

It belongs to the UPF0161 family.

Its subcellular location is the cell membrane. In terms of biological role, could be involved in insertion of integral membrane proteins into the membrane. The sequence is that of Putative membrane protein insertion efficiency factor from Geobacillus sp. (strain WCH70).